The sequence spans 124 residues: Putative iron-sulfur cluster insertion protein ErpA 2 (124 aa).

The iron-sulfur cluster site is built by cysteine 52, cysteine 116, and cysteine 118.

It belongs to the HesB/IscA family. As to quaternary structure, homodimer. Iron-sulfur cluster is required as a cofactor.

Its function is as follows. Required for insertion of 4Fe-4S clusters. The chain is Putative iron-sulfur cluster insertion protein ErpA 2 from Burkholderia vietnamiensis (strain G4 / LMG 22486) (Burkholderia cepacia (strain R1808)).